The sequence spans 275 residues: NH(3)-dependent NAD(+) synthetase (275 aa).

ATP is bound at residue 47-54 (GISGGQDS). A Mg(2+)-binding site is contributed by D53. R141 serves as a coordination point for deamido-NAD(+). T161 is an ATP binding site. Residue E166 coordinates Mg(2+). Residues K174 and D181 each coordinate deamido-NAD(+). ATP is bound by residues K190 and T212. 261–262 (HK) contributes to the deamido-NAD(+) binding site.

Belongs to the NAD synthetase family. As to quaternary structure, homodimer.

The catalysed reaction is deamido-NAD(+) + NH4(+) + ATP = AMP + diphosphate + NAD(+) + H(+). It participates in cofactor biosynthesis; NAD(+) biosynthesis; NAD(+) from deamido-NAD(+) (ammonia route): step 1/1. Its function is as follows. Catalyzes the ATP-dependent amidation of deamido-NAD to form NAD. Uses ammonia as a nitrogen source. The protein is NH(3)-dependent NAD(+) synthetase of Lacticaseibacillus paracasei (strain ATCC 334 / BCRC 17002 / CCUG 31169 / CIP 107868 / KCTC 3260 / NRRL B-441) (Lactobacillus paracasei).